Reading from the N-terminus, the 636-residue chain is MTTDSYPKKYDIVIVGAGPVGILLSLCMSRWGYKVKHIDNRPVPTATGRADGIQPRSTEILRNLGLKRKIMAYDPAKVYDVSFWDPRPDGSGIMRTGNWPSCPRFIDTRYPFTTLVHQGKIETVFLDEIKKAGTTVERPWTIIGFKNDGLDATYPVQVQLKCLDTNVVETVRAKYLFSGEGARSFVREQLGIQIRHKDPISYVWGVMDGVVRTDFPDIQTKCTIHSDAGSIMVIPREDDMVRLYVQIASSSDPDFNPRKTATAEEVQNVAKKILKPYYIEWDRVEWYSVYPIGQGISEKYTLDERVFMGGDACHTHSPKAGQGMNTAFHDALNMAWKLHAVESGLAQRSILSTYETERKNIAETLLDFDNKYAALFSKRRPNAGEVGEAATAETGRSAEEDPFVKTFKDSCEFTSGYGVAYLPNIFNWDPSHPAKSPLFDVPGINLVTGKAFTPSTVTRLADSNFVHLEQEIPANGAFRIFIFAGRQSRSKKAIADFAANLEKERSFLSAYRRSDIGEISFFERHNPHSKLFTLCLIYAEKKNDIDMDSIPQILRDYRYHIYSDDIPDVRVPNATYAAHEKLGFDPEKGGVVVTRPDSHIACTVQLAEGSGTVDALNAYFGSFSTKPLGQEQASRL.

Residues 11–40 (DIVI…HIDN), 242–244 (RLY), Tyr290, and Asp311 contribute to the FAD site. Residues 12–33 (IVIVGAGPVGILLSLCMSRWGY) traverse the membrane as a helical segment. Asn573 carries N-linked (GlcNAc...) asparagine glycosylation.

Belongs to the PheA/TfdB FAD monooxygenase family. FAD is required as a cofactor.

The protein resides in the membrane. It catalyses the reaction 4-hydroxybenzoate + NADH + O2 + H(+) = 3,4-dihydroxybenzoate + NAD(+) + H2O. It carries out the reaction 4-hydroxybenzoate + NADPH + O2 + H(+) = 3,4-dihydroxybenzoate + NADP(+) + H2O. FAD-dependent monooxygenase; part of the benzoic acid degradation pathway also known as the protocatechuic acid pathway. Benzoic acid debradation begins with the conversion of benzoic acid into 4-hydroxybenzoic acid through hydroxylation by the benzoate-4-monooxygenase bphA, and its partner NADPH-cytochrome P450 reductase cprA which act as a mediator in electron donation from NADPH. 4-Hydroxybenzoic acid is then converted into 3,4-dihydroxybenzoic acid (also called protocatechuic acid) by the p-hydroxybenzoate-m-hydroxylase phhA. Protocatechuic acid is converted into 3-carboxy-cis,cis-muconic acid by the intradiol ring-cleavage dioxygenase prcA, which is further metabolized through the 3-oxoadipate pathway to finally enter the tricarboxylic acid cycle (TCA). The chain is p-hydroxybenzoate-m-hydroxylase from Emericella nidulans (strain FGSC A4 / ATCC 38163 / CBS 112.46 / NRRL 194 / M139) (Aspergillus nidulans).